A 257-amino-acid polypeptide reads, in one-letter code: Thiazole synthase (257 aa).

Catalysis depends on Lys96, which acts as the Schiff-base intermediate with DXP. Residues Gly157, 184 to 185 (AG), and 206 to 207 (NT) each bind 1-deoxy-D-xylulose 5-phosphate.

It belongs to the ThiG family. As to quaternary structure, homotetramer. Forms heterodimers with either ThiH or ThiS.

The protein resides in the cytoplasm. The catalysed reaction is [ThiS sulfur-carrier protein]-C-terminal-Gly-aminoethanethioate + 2-iminoacetate + 1-deoxy-D-xylulose 5-phosphate = [ThiS sulfur-carrier protein]-C-terminal Gly-Gly + 2-[(2R,5Z)-2-carboxy-4-methylthiazol-5(2H)-ylidene]ethyl phosphate + 2 H2O + H(+). It functions in the pathway cofactor biosynthesis; thiamine diphosphate biosynthesis. Catalyzes the rearrangement of 1-deoxy-D-xylulose 5-phosphate (DXP) to produce the thiazole phosphate moiety of thiamine. Sulfur is provided by the thiocarboxylate moiety of the carrier protein ThiS. In vitro, sulfur can be provided by H(2)S. This is Thiazole synthase from Bartonella quintana (strain Toulouse) (Rochalimaea quintana).